Reading from the N-terminus, the 498-residue chain is ATP synthase subunit beta, chloroplastic (498 aa).

172–179 is a binding site for ATP; that stretch reads GGAGVGKT.

The protein belongs to the ATPase alpha/beta chains family. In terms of assembly, F-type ATPases have 2 components, CF(1) - the catalytic core - and CF(0) - the membrane proton channel. CF(1) has five subunits: alpha(3), beta(3), gamma(1), delta(1), epsilon(1). CF(0) has four main subunits: a(1), b(1), b'(1) and c(9-12).

The protein localises to the plastid. The protein resides in the chloroplast thylakoid membrane. It catalyses the reaction ATP + H2O + 4 H(+)(in) = ADP + phosphate + 5 H(+)(out). Produces ATP from ADP in the presence of a proton gradient across the membrane. The catalytic sites are hosted primarily by the beta subunits. This Canella winterana (Wild cinnamon) protein is ATP synthase subunit beta, chloroplastic.